A 228-amino-acid polypeptide reads, in one-letter code: Endolytic peptidoglycan transglycosylase RlpA (228 aa).

The signal sequence occupies residues 1–23 (MIQRHKLIVLIFLLIFCLSGCNT).

The protein belongs to the RlpA family.

Lytic transglycosylase with a strong preference for naked glycan strands that lack stem peptides. This chain is Endolytic peptidoglycan transglycosylase RlpA, found in Rickettsia felis (strain ATCC VR-1525 / URRWXCal2) (Rickettsia azadi).